We begin with the raw amino-acid sequence, 277 residues long: Cell wall protein PGA30 (277 aa).

Residues 1–18 form the signal peptide; it reads MKYFTIATVLTLASSALA. N-linked (GlcNAc...) asparagine glycans are attached at residues asparagine 129 and asparagine 178. A disordered region spans residues 219 to 246; sequence VLPSSSTEAPPKTSVAAPSTTAEAQTTA. Positions 234-246 are enriched in polar residues; it reads AAPSTTAEAQTTA. Residue glycine 253 is the site of GPI-anchor amidated glycine attachment. Residues 254–277 constitute a propeptide, removed in mature form; sequence GANEIVGGGSMAIALAAAAIGLVI.

This sequence belongs to the SRP1/TIP1 family. Post-translationally, the GPI-anchor is attached to the protein in the endoplasmic reticulum and serves to target the protein to the cell surface. There, the glucosamine-inositol phospholipid moiety is cleaved off and the GPI-modified mannoprotein is covalently attached via its lipidless GPI glycan remnant to the 1,6-beta-glucan of the outer cell wall layer.

The protein localises to the secreted. Its subcellular location is the cell wall. It is found in the membrane. Functionally, component of the cell wall involved in virulence which plays a role in the relationship between C.albicans and the host. The protein is Cell wall protein PGA30 (PGA30) of Candida albicans (strain SC5314 / ATCC MYA-2876) (Yeast).